We begin with the raw amino-acid sequence, 121 residues long: T cell receptor alpha variable 23/delta variable 6 (121 aa).

Residues 1–21 (MDKILGASFLVLWLQLCWVSG) form the signal peptide. Positions 30–121 (QQVKQSPQSL…DSATYFCAAS (92 aa)) constitute an Ig-like domain. Cysteines 51 and 118 form a disulfide. A glycan (N-linked (GlcNAc...) asparagine) is linked at N95.

In terms of assembly, alpha-beta TR is a heterodimer composed of an alpha and beta chain; disulfide-linked. The alpha-beta TR is associated with the transmembrane signaling CD3 coreceptor proteins to form the TR-CD3 (TcR or TCR). The assembly of alpha-beta TR heterodimers with CD3 occurs in the endoplasmic reticulum where a single alpha-beta TR heterodimer associates with one CD3D-CD3E heterodimer, one CD3G-CD3E heterodimer and one CD247 homodimer forming a stable octameric structure. CD3D-CD3E and CD3G-CD3E heterodimers preferentially associate with TR alpha and TR beta chains, respectively. The association of the CD247 homodimer is the last step of TcR assembly in the endoplasmic reticulum and is required for transport to the cell surface.

The protein localises to the cell membrane. V region of the variable domain of T cell receptor (TR) alpha chain that participates in the antigen recognition. Alpha-beta T cell receptors are antigen specific receptors which are essential to the immune response and are present on the cell surface of T lymphocytes. Recognize peptide-major histocompatibility (MH) (pMH) complexes that are displayed by antigen presenting cells (APC), a prerequisite for efficient T cell adaptive immunity against pathogens. Binding of alpha-beta TR to pMH complex initiates TR-CD3 clustering on the cell surface and intracellular activation of LCK that phosphorylates the ITAM motifs of CD3G, CD3D, CD3E and CD247 enabling the recruitment of ZAP70. In turn ZAP70 phosphorylates LAT, which recruits numerous signaling molecules to form the LAT signalosome. The LAT signalosome propagates signal branching to three major signaling pathways, the calcium, the mitogen-activated protein kinase (MAPK) kinase and the nuclear factor NF-kappa-B (NF-kB) pathways, leading to the mobilization of transcription factors that are critical for gene expression and essential for T cell growth and differentiation. The T cell repertoire is generated in the thymus, by V-(D)-J rearrangement. This repertoire is then shaped by intrathymic selection events to generate a peripheral T cell pool of self-MH restricted, non-autoaggressive T cells. Post-thymic interaction of alpha-beta TR with the pMH complexes shapes TR structural and functional avidity. This chain is T cell receptor alpha variable 23/delta variable 6, found in Homo sapiens (Human).